A 212-amino-acid polypeptide reads, in one-letter code: MKMKTLFLLIKLAKMGAIGKEITVTMRELSRELDVSPQTVLRWLEELKEQGYIHKRESRKGTLVELTEKGINLLEKLYEEISTALYSGFIVGEVISGIGEGAYYVRQYAPLIREYLGFDPYPGTLNVRVLFPKTIFDALCTARPIIIPGFTRNGRTFGDVRAYRVRIDGIEGAIVIPSRTVHPPKIAEIIAPVKLRDALNLKDGDKVRIEVV.

Positions 1 to 87 (MKMKTLFLLI…YEEISTALYS (87 aa)) are H-T-H motif-like. Residues 88 to 212 (GFIVGEVISG…DGDKVRIEVV (125 aa)) form a riboflavin kinase region. 97-102 (GIGEGA) contacts CDP. Positions 124 and 126 each coordinate Mg(2+). Residues Thr180 and Glu188 each contribute to the FMN site. Residue 193-196 (VKLR) coordinates CDP.

It belongs to the archaeal riboflavin kinase family. It depends on Mg(2+) as a cofactor.

The enzyme catalyses riboflavin + CTP = CDP + FMN + H(+). Its pathway is cofactor biosynthesis; FMN biosynthesis; FMN from riboflavin (CTP route): step 1/1. Functionally, catalyzes the CTP-dependent phosphorylation of riboflavin (vitamin B2) to form flavin mononucleotide (FMN). This Pyrococcus abyssi (strain GE5 / Orsay) protein is Riboflavin kinase (ribK).